A 172-amino-acid polypeptide reads, in one-letter code: uncharacterized protein (172 aa).

Over residues 1–17 (MISLDKDENEIEHHNEE) the composition is skewed to basic and acidic residues. Residues 1-27 (MISLDKDENEIEHHNEENSLVEQETAP) form a disordered region. Residues 129-151 (IVTVLIGIIVAIFVLVVIGIAAF) form a helical membrane-spanning segment.

The protein localises to the membrane. This is an uncharacterized protein from Bacillus subtilis (strain 168).